An 830-amino-acid chain; its full sequence is Leucine--tRNA ligase (830 aa).

Positions 42 to 52 (PYPSGNLHMGH) match the 'HIGH' region motif. The 'KMSKS' region signature appears at 585–589 (KMSKS). ATP is bound at residue K588.

The protein belongs to the class-I aminoacyl-tRNA synthetase family.

The protein resides in the cytoplasm. The catalysed reaction is tRNA(Leu) + L-leucine + ATP = L-leucyl-tRNA(Leu) + AMP + diphosphate. This is Leucine--tRNA ligase from Halothermothrix orenii (strain H 168 / OCM 544 / DSM 9562).